A 152-amino-acid chain; its full sequence is Antiholin-like protein LrgA (152 aa).

4 helical membrane-spanning segments follow: residues Tyr-23–Glu-43, Phe-45–Cys-65, Val-77–Ile-97, and Ile-108–Ser-128.

The protein belongs to the CidA/LrgA family. LrgA subfamily.

Its subcellular location is the cell membrane. Its function is as follows. Inhibits the expression or activity of extracellular murein hydrolases by interacting, possibly with LrgB, with the holin-like proteins CidA and/or CidB. The LrgAB and CidAB proteins may affect the proton motive force of the membrane. May be involved in programmed cell death (PCD), possibly triggering PCD in response to antibiotics and environmental stresses. The sequence is that of Antiholin-like protein LrgA from Staphylococcus epidermidis (strain ATCC 12228 / FDA PCI 1200).